A 354-amino-acid chain; its full sequence is Ornithine cyclodeaminase (354 aa).

Positions 53 and 77 each coordinate L-ornithine. NAD(+) contacts are provided by residues threonine 92, arginine 120, 147 to 148 (AQ), aspartate 169, threonine 209, 232 to 235 (VGGD), lysine 239, and serine 300. An L-ornithine-binding site is contributed by arginine 120. L-ornithine is bound at residue aspartate 235. The active-site Proton donor/acceptor is the aspartate 235. L-ornithine is bound at residue valine 301.

It belongs to the ornithine cyclodeaminase/mu-crystallin family. The cofactor is NAD(+).

The catalysed reaction is L-ornithine = L-proline + NH4(+). Its pathway is amino-acid biosynthesis; L-proline biosynthesis; L-proline from L-ornithine: step 1/1. With respect to regulation, is subject to substrate inhibition. Is regulated by L-arginine, which stimulates enzymatic activity at 0.1-1 mM while inhibits activity at higher concentrations, and has pronounced effects on the optima for pH and temperature and on the Km for L-ornithine. Is not inhibited by L-proline. Its function is as follows. Catalyzes the conversion of L-ornithine into L-proline with release of ammonia. Is involved in the utilization of nopaline, a catabolic pathway that proceeds through L-arginine and L-ornithine to L-proline. Nopaline is a predominant opine in plant cells transformed with Ti plasmid pTiC58. This chain is Ornithine cyclodeaminase, found in Agrobacterium fabrum (strain C58 / ATCC 33970) (Agrobacterium tumefaciens (strain C58)).